Consider the following 134-residue polypeptide: Small ribosomal subunit protein uS8c (134 aa).

The protein belongs to the universal ribosomal protein uS8 family. As to quaternary structure, part of the 30S ribosomal subunit.

The protein localises to the plastid. It localises to the chloroplast. One of the primary rRNA binding proteins, it binds directly to 16S rRNA central domain where it helps coordinate assembly of the platform of the 30S subunit. The polypeptide is Small ribosomal subunit protein uS8c (rps8) (Aethionema grandiflorum (Persian stone-cress)).